A 215-amino-acid polypeptide reads, in one-letter code: MRQFDRHQGLVAPMDRANVDTDLIIPKQFLKSIKRTGFGPNLFDELRYLDEGYPGQDVAKRPLNPDFVLNQPRYQGASVLLARRNFGCGSSREHAPWALEDFGFRVIIAPSFADIFFNNAFKNGLLLITFDEATVDRLFQEAEAEEGYRLDVDLEKQQVTTPSGEVLTFEVDPFRKHCLLEGLDDIGLTLKDADAIEDFEARHRQARPWLFRQAG.

Belongs to the LeuD family. LeuD type 1 subfamily. In terms of assembly, heterodimer of LeuC and LeuD.

It carries out the reaction (2R,3S)-3-isopropylmalate = (2S)-2-isopropylmalate. The protein operates within amino-acid biosynthesis; L-leucine biosynthesis; L-leucine from 3-methyl-2-oxobutanoate: step 2/4. Catalyzes the isomerization between 2-isopropylmalate and 3-isopropylmalate, via the formation of 2-isopropylmaleate. The polypeptide is 3-isopropylmalate dehydratase small subunit (Chromohalobacter salexigens (strain ATCC BAA-138 / DSM 3043 / CIP 106854 / NCIMB 13768 / 1H11)).